The primary structure comprises 562 residues: Potassium-transporting ATPase potassium-binding subunit (562 aa).

12 consecutive transmembrane segments (helical) span residues 6-26 (FLLIASFMLVLFVLSRPLGGF), 62-82 (YALAILCFNLLGIVLLFVLLM), 132-152 (GLTVQNFLSAATGIAVAFALI), 175-195 (LYVLLPIALIIALIFVSQGVL), 253-273 (FVQMLAIFLIPCALCFAFGQV), 283-303 (LIWAMSLIFIVAVVVVMYAEL), 327-347 (FGILATSLYAVVTTAASCGAV), 356-376 (ALGGMIPLWLMQIGEVVFGGV), 379-399 (GLYGMLLFVLLTVFIAGLMIG), 416-436 (MTALAILVTPTIVLLGTALAL), 483-503 (LLLAAAMFIGRFGVILPVLAI), and 524-544 (GLLFIGLLIGTVLLVGALTFI).

This sequence belongs to the KdpA family. The system is composed of three essential subunits: KdpA, KdpB and KdpC.

It localises to the cell inner membrane. Part of the high-affinity ATP-driven potassium transport (or Kdp) system, which catalyzes the hydrolysis of ATP coupled with the electrogenic transport of potassium into the cytoplasm. This subunit binds the periplasmic potassium ions and delivers the ions to the membrane domain of KdpB through an intramembrane tunnel. In Yersinia pestis bv. Antiqua (strain Antiqua), this protein is Potassium-transporting ATPase potassium-binding subunit.